The following is a 473-amino-acid chain: Photosystem II CP43 reaction center protein (473 aa).

Positions 1-14 (MKTLYSLRRFYHVE) are excised as a propeptide. Thr-15 carries the N-acetylthreonine modification. At Thr-15 the chain carries Phosphothreonine. Helical transmembrane passes span 69–93 (LFEV…PHLA), 134–155 (LLGP…KDRN), 178–200 (KALY…RKIA), 255–275 (KPFA…LSYS), and 291–312 (WFNN…ASQA). Glu-367 lines the [CaMn4O5] cluster pocket. Residues 447-471 (RARAAAAGFEKGIDRDFEPVLSMTP) form a helical membrane-spanning segment.

It belongs to the PsbB/PsbC family. PsbC subfamily. As to quaternary structure, PSII is composed of 1 copy each of membrane proteins PsbA, PsbB, PsbC, PsbD, PsbE, PsbF, PsbH, PsbI, PsbJ, PsbK, PsbL, PsbM, PsbT, PsbX, PsbY, PsbZ, Psb30/Ycf12, at least 3 peripheral proteins of the oxygen-evolving complex and a large number of cofactors. It forms dimeric complexes. It depends on Binds multiple chlorophylls and provides some of the ligands for the Ca-4Mn-5O cluster of the oxygen-evolving complex. It may also provide a ligand for a Cl- that is required for oxygen evolution. PSII binds additional chlorophylls, carotenoids and specific lipids. as a cofactor.

Its subcellular location is the plastid membrane. Its function is as follows. One of the components of the core complex of photosystem II (PSII). It binds chlorophyll and helps catalyze the primary light-induced photochemical processes of PSII. PSII is a light-driven water:plastoquinone oxidoreductase, using light energy to abstract electrons from H(2)O, generating O(2) and a proton gradient subsequently used for ATP formation. In Cuscuta exaltata (Tall dodder), this protein is Photosystem II CP43 reaction center protein.